Here is a 316-residue protein sequence, read N- to C-terminus: MTPLSAVATPTPAPAEAADSRFSNTFLRLKKKLERGVGKAIADFNMIGDGDTVMVCVSGGKDSYTLLSCLLALRERAPVDFRIIAMNLDQKQPGFPAEVLPAYFESIGVEYRIVTEDTYSIVKDKIPEGKTTCSLCSRLRRGIIYRVARELGATRIALGHHRDDMLETLFLNLFFGGKIKAMPPKLVSDNGEHVVIRPLAYCTEADIAKFARTMEFPIIPCNLCGSQENAQRKQIKTMLQGWAREHPGRIESIATALGQVVPSHLADASLFDFRNLTRDTLVAEGDIAFDRAELPPASAAVMPTVMQLTDHRTDGK.

The PP-loop motif motif lies at 58-63; sequence SGGKDS. [4Fe-4S] cluster is bound by residues C133, C136, and C224.

It belongs to the TtcA family. In terms of assembly, homodimer. Mg(2+) is required as a cofactor. It depends on [4Fe-4S] cluster as a cofactor.

The protein localises to the cytoplasm. The enzyme catalyses cytidine(32) in tRNA + S-sulfanyl-L-cysteinyl-[cysteine desulfurase] + AH2 + ATP = 2-thiocytidine(32) in tRNA + L-cysteinyl-[cysteine desulfurase] + A + AMP + diphosphate + H(+). It functions in the pathway tRNA modification. Catalyzes the ATP-dependent 2-thiolation of cytidine in position 32 of tRNA, to form 2-thiocytidine (s(2)C32). The sulfur atoms are provided by the cysteine/cysteine desulfurase (IscS) system. This is tRNA-cytidine(32) 2-sulfurtransferase from Aromatoleum aromaticum (strain DSM 19018 / LMG 30748 / EbN1) (Azoarcus sp. (strain EbN1)).